The primary structure comprises 394 residues: MNKKSIRDVDLKGKRVFCRVDFNVPMKEGKITDETRIRAALPTIQYLIEQGAKVILASHLGRPKGQAVEELRLTPVAARLGELLGKDVKKADEAFGPVAQEMVAAMNEGDVLVLENVRFYAGEEKNDAELAKEFAALADIFVNDAFGAAHRAHASTAGIADYLPAVSGLLMEKELDVLGKALSNPERPFTAIIGGAKVKDKIGVIRHLLDKVDNLIIGGGLAYTFVKALGHEIGLSLCENDKIELAKEFMQLAKEKGVNFYMPVDVVITEEFSETATTQIVGIDSIPSTWEGVDIGPKTREIYADVIKNSKLVVWNGPMGVFEMTPFAEGTKAVGQALADAEDTYSVIGGGDSAAAVEKFGMADKMSHISTGGGASLEFMEGKELPGVVCLNDK.

Substrate contacts are provided by residues 21 to 23 (DFN), arginine 36, 59 to 62 (HLGR), arginine 118, and arginine 151. Serine 183 is subject to Phosphoserine. Residues lysine 201 and glycine 292 each contribute to the ATP site. Threonine 299 carries the post-translational modification Phosphothreonine. Residues glutamate 323 and 350–353 (GGDS) contribute to the ATP site.

Belongs to the phosphoglycerate kinase family. Monomer.

It is found in the cytoplasm. The catalysed reaction is (2R)-3-phosphoglycerate + ATP = (2R)-3-phospho-glyceroyl phosphate + ADP. Its pathway is carbohydrate degradation; glycolysis; pyruvate from D-glyceraldehyde 3-phosphate: step 2/5. This is Phosphoglycerate kinase from Bacillus mycoides (strain KBAB4) (Bacillus weihenstephanensis).